The chain runs to 354 residues: Inactive ADP-ribosyltransferase ARH2 (354 aa).

Serine 27 carries the phosphoserine modification.

It belongs to the ADP-ribosylglycohydrolase family.

It localises to the cytoplasm. Its subcellular location is the myofibril. The protein localises to the sarcomere. Its function is as follows. Required for myofibril assembly and outgrowth of the cardiac chambers in the developing heart. Appears to be catalytically inactive, showing no activity against O-acetyl-ADP-ribose. The polypeptide is Inactive ADP-ribosyltransferase ARH2 (ADPRHL1) (Homo sapiens (Human)).